The following is a 556-amino-acid chain: MSLIATVGPTGGVKNRLNIVDFVKNEKFFTLYVRSLELLQAKEQHDYSSFFQLAGIHGLPFTEWAKERPSMNLYKAGYCTHGQVLFPTWHRTYLSVLEQILQGAAIEVAKKFTSNQTDWVQAAQDLRQPYWDWGFELMPPDEVIKNEEVNITNYDGKKISVKNPILRYHFHPIDPSFKPYGDFATWRTTVRNPDRNRREDIPGLIKKMRLEEGQIREKTYNMLKFNDAWERFSNHGISDDQHANSLESVHDDIHVMVGYGKIEGHMDHPFFAAFDPIFWLHHTNVDRLLSLWKAINPDVWVTSGRNRDGTMGIAPNAQINSETPLEPFYQSGDKVWTSASLADTARLGYSYPDFDKLVGGTKELIRDAIDDLIDERYGSKPSSGARNTAFDLLADFKGITKEHKEDLKMYDWTIHVAFKKFELKESFSLLFYFASDGGDYDQENCFVGSINAFRGTAPETCANCQDNENLIQEGFIHLNHYLARDLESFEPQDVHKFLKEKGLSYKLYSRGDKPLTSLSVKIEGRPLHLPPGEHRPKYDHTQARVVFDDVAVHVIN.

The Cu cation site is built by His-57, His-81, His-90, His-250, His-254, and His-282. A cross-link (2'-(S-cysteinyl)-histidine (Cys-His)) is located at residues Cys-79–His-81. A substrate-binding site is contributed by His-254. A propeptide spans Ser-379–Asn-556 (removed in mature form).

The protein belongs to the tyrosinase family. In terms of assembly, heterotetramer. Requires Cu(2+) as cofactor. The C-ter is probably cleaved after Gly-378 since the mature active protein is smaller than the protein encoded by the gene.

The catalysed reaction is 2 L-dopa + O2 = 2 L-dopaquinone + 2 H2O. It catalyses the reaction L-tyrosine + O2 = L-dopaquinone + H2O. In terms of biological role, copper-containing oxidase that catalyzes both the o-hydroxylation of monophenols and the subsequent oxidation of the resulting o-diphenols into reactive o-quinones, which evolve spontaneously to produce intermediates, which associate in dark brown pigments. Involved in the initial step of melanin synthesis. Melanins constitute a mechanism of defense and resistance to stress such as UV radiations, free radicals, gamma rays, dehydratation and extreme temperatures, and contribute to the fungal cell-wall resistance against hydrolytic enzymes in avoiding cellular lysis. Fungal pigments are also involved in the formation and stability of spores. The sequence is that of Polyphenol oxidase 2 (PPO2) from Agaricus bisporus (White button mushroom).